The primary structure comprises 118 residues: ATP-dependent Clp protease adapter protein ClpS (118 aa).

Positions 1 to 24 (MNGSSNSGSPGGGQTGDDDGTGFD) are disordered.

Belongs to the ClpS family. In terms of assembly, binds to the N-terminal domain of the chaperone ClpA.

Its function is as follows. Involved in the modulation of the specificity of the ClpAP-mediated ATP-dependent protein degradation. In Hyphomonas neptunium (strain ATCC 15444), this protein is ATP-dependent Clp protease adapter protein ClpS.